A 376-amino-acid chain; its full sequence is Cysteine synthase 1 (376 aa).

The N-terminal 16 residues, 1 to 16 (MFRHGVRTFATTSLRR), are a transit peptide targeting the mitochondrion. An N6-(pyridoxal phosphate)lysine modification is found at Lys79. Pyridoxal 5'-phosphate contacts are provided by residues Asn109, 215–219 (GTGGT), and Ser314.

This sequence belongs to the cysteine synthase/cystathionine beta-synthase family. It depends on pyridoxal 5'-phosphate as a cofactor.

The protein resides in the mitochondrion. The enzyme catalyses O-succinyl-L-serine + hydrogen sulfide = L-cysteine + succinate. It carries out the reaction O-acetyl-L-serine + hydrogen sulfide = L-cysteine + acetate. It participates in amino-acid biosynthesis; L-cysteine biosynthesis; L-cysteine from L-serine: step 2/2. In terms of biological role, catalyzes the conversion of O-succinyl-L-serine into cysteine, the last step in the cysteine biosynthesis pathway. Can also use O-acetyl-L-serine. This Neurospora crassa (strain ATCC 24698 / 74-OR23-1A / CBS 708.71 / DSM 1257 / FGSC 987) protein is Cysteine synthase 1 (cys-17).